Reading from the N-terminus, the 136-residue chain is Heavy metal-associated isoprenylated plant protein 19 (136 aa).

Residues 13–77 form the HMA domain; sequence YMDVEFNVSM…LKKKTGKRVK (65 aa). The a metal cation site is built by Cys-24 and Cys-27. A Cysteine methyl ester modification is found at Cys-133. Cys-133 is lipidated: S-farnesyl cysteine. The propeptide at 134–136 is removed in mature form; it reads SIS.

Belongs to the HIPP family.

Its function is as follows. Heavy-metal-binding protein. This chain is Heavy metal-associated isoprenylated plant protein 19, found in Arabidopsis thaliana (Mouse-ear cress).